A 225-amino-acid polypeptide reads, in one-letter code: Membrane protein (225 aa).

At 1–20 the chain is on the virion surface side; it reads MPNETNCTLDFEQSVQLFKE. The chain crosses the membrane as a helical span at residues 21–41; sequence YNLFITAFLLFLTIILQYGYA. The Intravirion segment spans residues 42 to 51; that stretch reads TRTKVIYTLK. Residues 52-72 form a helical membrane-spanning segment; sequence MIVLWCFWPLNIAVGVISCTY. Over 73–77 the chain is Virion surface; it reads PPNTG. Residues 78-98 traverse the membrane as a helical segment; the sequence is GLVVAIILTVFACLSFVGYWI. Residues 99–225 are Intravirion-facing; that stretch reads QSIRLFKRCR…VATGGSSLYT (127 aa).

The protein belongs to the gammacoronaviruses M protein family. In terms of assembly, homomultimer. Interacts with envelope E protein in the budding compartment of the host cell, which is located between endoplasmic reticulum and the Golgi complex. Forms a complex with HE and S proteins. Interacts with nucleocapsid N protein. This interaction probably participates in RNA packaging into the virus.

It localises to the virion membrane. It is found in the host Golgi apparatus membrane. Functionally, component of the viral envelope that plays a central role in virus morphogenesis and assembly via its interactions with other viral proteins. This chain is Membrane protein, found in Avian infectious bronchitis virus (strain Beaudette US) (IBV).